The chain runs to 225 residues: Uracil-DNA glycosylase (225 aa).

Residue Asp-65 is the Proton acceptor of the active site.

This sequence belongs to the uracil-DNA glycosylase (UDG) superfamily. UNG family.

It is found in the cytoplasm. The catalysed reaction is Hydrolyzes single-stranded DNA or mismatched double-stranded DNA and polynucleotides, releasing free uracil.. Functionally, excises uracil residues from the DNA which can arise as a result of misincorporation of dUMP residues by DNA polymerase or due to deamination of cytosine. The polypeptide is Uracil-DNA glycosylase (Bacillus cytotoxicus (strain DSM 22905 / CIP 110041 / 391-98 / NVH 391-98)).